The primary structure comprises 814 residues: Ubiquitin carboxyl-terminal hydrolase 45 (814 aa).

The span at 1 to 14 shows a compositional bias: basic and acidic residues; the sequence is MRVKDPTKALPEKA. The interval 1–28 is disordered; it reads MRVKDPTKALPEKAKRSKRPTVPHDEDS. Residues 1-62 are interaction with ERCC1; that stretch reads MRVKDPTKAL…AIAENLWSVC (62 aa). Phosphoserine is present on residues serine 28 and serine 29. A UBP-type zinc finger spans residues 36–153; sequence LTCQHVSHAI…AQIVDFLQKH (118 aa). Zn(2+) contacts are provided by cysteine 38, histidine 40, cysteine 62, cysteine 65, cysteine 85, cysteine 88, cysteine 93, histidine 101, histidine 105, histidine 114, cysteine 127, and cysteine 130. The USP domain maps to 190 to 813; that stretch reads RGITNLGNTC…QAYLLFYERV (624 aa). The Nucleophile role is filled by cysteine 199. Disordered regions lie at residues 418 to 443 and 479 to 533; these read IENI…IHDR and ESRL…PDGP. Residues 432–443 are compositionally biased toward basic and acidic residues; that stretch reads SSKDKSQLIHDR. Phosphoserine occurs at positions 508 and 526. The segment covering 515 to 527 has biased composition (polar residues); sequence KQTGLFRSSSGSG. Catalysis depends on histidine 746, which acts as the Proton acceptor.

This sequence belongs to the peptidase C19 family. In terms of assembly, interacts with ERCC1. The catalytically active form interacts with SPDL1. Widely expressed. High expression is detected in the cerebellum. In the eye, it is expressed at high levels in the optic nerve, sclera and retina, with relatively low levels in the choroid, lens and retinal pigment epithelium.

It localises to the photoreceptor inner segment. It is found in the cytoplasm. Its subcellular location is the nucleus. It catalyses the reaction Thiol-dependent hydrolysis of ester, thioester, amide, peptide and isopeptide bonds formed by the C-terminal Gly of ubiquitin (a 76-residue protein attached to proteins as an intracellular targeting signal).. Its function is as follows. Catalyzes the deubiquitination of SPDL1. Plays a role in the repair of UV-induced DNA damage via deubiquitination of ERCC1, promoting its recruitment to DNA damage sites. May be involved in the maintenance of photoreceptor function. May play a role in normal retinal development. Plays a role in cell migration. The chain is Ubiquitin carboxyl-terminal hydrolase 45 (USP45) from Homo sapiens (Human).